We begin with the raw amino-acid sequence, 371 residues long: Alanine dehydrogenase (371 aa).

Arg15 and Lys75 together coordinate substrate. The Proton donor/acceptor role is filled by His96. NAD(+) contacts are provided by residues Ser134, Asp198, Arg203, Ser220, 239–240 (VL), 267–270 (VAID), Lys279, and 298–301 (VANM). Asp270 functions as the Proton donor/acceptor in the catalytic mechanism.

It belongs to the AlaDH/PNT family. Mg(2+) is required as a cofactor.

The enzyme catalyses L-alanine + NAD(+) + H2O = pyruvate + NH4(+) + NADH + H(+). It participates in amino-acid degradation; L-alanine degradation via dehydrogenase pathway; NH(3) and pyruvate from L-alanine: step 1/1. Its function is as follows. Catalyzes the reversible reductive amination of pyruvate to L-alanine. This Halomonas elongata (strain ATCC 33173 / DSM 2581 / NBRC 15536 / NCIMB 2198 / 1H9) protein is Alanine dehydrogenase.